We begin with the raw amino-acid sequence, 158 residues long: Disulfide bond formation protein B (158 aa).

The Cytoplasmic segment spans residues 1-7; the sequence is MKNSRPV. A helical transmembrane segment spans residues 8 to 24; sequence LFAVALASLLLLAVALY. Residues 25-42 lie on the Periplasmic side of the membrane; sequence LQHVENMLPCPLCVIQRY. A disulfide bond links Cys34 and Cys37. Residues 43 to 57 traverse the membrane as a helical segment; that stretch reads AFAAIALICLVTAFR. The Cytoplasmic segment spans residues 58–63; sequence TEVTAR. A helical transmembrane segment spans residues 64 to 81; sequence IGAALAALASLAGAGVAG. The Periplasmic segment spans residues 82 to 136; the sequence is WHIYIKAHPTVSCGIDPLETSLNTIPTAKLLPFLLQADGLCTTEYAPIMGLSIPQ. Residues Cys94 and Cys122 are joined by a disulfide bond. A helical transmembrane segment spans residues 137 to 155; sequence WALVWFIVIALFLLHTAFR. Residues 156–158 lie on the Cytoplasmic side of the membrane; sequence KKS.

This sequence belongs to the DsbB family.

It localises to the cell inner membrane. Functionally, required for disulfide bond formation in some periplasmic proteins. Acts by oxidizing the DsbA protein. This is Disulfide bond formation protein B from Herminiimonas arsenicoxydans.